A 300-amino-acid chain; its full sequence is Dioxygenase FUM3 (300 aa).

H146, D148, and H222 together coordinate Fe cation.

This sequence belongs to the PhyH family. In terms of assembly, homodimer. Requires Fe cation as cofactor.

Its pathway is mycotoxin biosynthesis. Its function is as follows. Dioxygenase; part of the gene cluster that mediates the biosynthesis of fumonisins B1 (FB1), B2 (FB2), B3 (FB3), and B4 (FB4), which are carcinogenic mycotoxins. Within the pathway, FUM3 performs the C-5 hydroxylation present in FB1 and FB2 and which occurs late in the biosynthesis. The biosynthesis starts with the FUM1-catalyzed carbon chain assembly from one molecule of acetyl-CoA, eight molecules of malonyl-CoA, and two molecules of methionine (in S-adenosyl form). The C18 polyketide chain is released from the enzyme by a nucleophilic attack of a carbanion, which is derived from R-carbon of alanine by decarboxylation, on the carbonyl carbon of polyketide acyl chain. This step is catalyzed by the pyridoxal 5'-phosphate-dependent aminoacyl transferase FUM8. The resultant 3-keto intermediate is then stereospecifically reduced to a 3-hydroxyl product by reductase FUM13. Subsequent oxidations at C-10 by the cytochrome P450 monooxygenase FUM2, C-14 and C-15 by FUM6, FUM12 or FUM15, tricarballylic esterification of the hydroxyl groups on C-14 and C-15 by acyltransferase FUM14, and C-5 hydroxylation by 2-keto-glutarate-dependent dioxygenase FUM3 furnish the biosynthesis of fumonisins. The tricarballylic moieties are most likely derived from the citric acid cycle, and their addition to the carbon backbone may involve FUM7, FUM10, FUM11 and FUM14. The sequence is that of Dioxygenase FUM3 from Gibberella moniliformis (strain M3125 / FGSC 7600) (Maize ear and stalk rot fungus).